Consider the following 320-residue polypeptide: Pyrroline-5-carboxylate reductase 2 (320 aa).

At serine 2 the chain carries N-acetylserine. NADP(+)-binding positions include 6 to 11 (IGAGQL) and serine 34. Residues alanine 8, glutamine 10, leucine 11, serine 34, glutamate 36, asparagine 56, valine 70, lysine 71, and alanine 97 each coordinate NADPH. Residues asparagine 56, 69 to 72 (AVKP), and 95 to 97 (CAA) each bind NADP(+). Glutamate 164 contributes to the L-proline binding site. Asparagine 230 provides a ligand contact to NADPH. L-proline is bound by residues alanine 237 and threonine 238. Positions 296-305 (TVSTLTPSSP) are enriched in low complexity. Residues 296 to 320 (TVSTLTPSSPGKLLTRSLALGGKKD) form a disordered region. A Phosphoserine modification is found at serine 304.

Belongs to the pyrroline-5-carboxylate reductase family. Homodecamer; composed of 5 homodimers. Interacts with LTO1.

It localises to the cytoplasm. The protein resides in the mitochondrion. The enzyme catalyses L-proline + NADP(+) = (S)-1-pyrroline-5-carboxylate + NADPH + 2 H(+). The catalysed reaction is L-proline + NAD(+) = (S)-1-pyrroline-5-carboxylate + NADH + 2 H(+). Its pathway is amino-acid biosynthesis; L-proline biosynthesis; L-proline from L-glutamate 5-semialdehyde: step 1/1. Its function is as follows. Oxidoreductase that catalyzes the last step in proline biosynthesis, which corresponds to the reduction of pyrroline-5-carboxylate to L-proline using NAD(P)H. At physiologic concentrations, has higher specific activity in the presence of NADH. Involved in cellular response to oxidative stress. In some cell types, such as erythrocytes, its primary function may be the generation of NADP(+). The sequence is that of Pyrroline-5-carboxylate reductase 2 (PYCR2) from Pongo abelii (Sumatran orangutan).